A 123-amino-acid polypeptide reads, in one-letter code: MGSCGGKHTGKGAPKPYSRNFTDPWRKTPGRLFGTALIRFYQITLSSLIGNSCRHLPTCSEYAYEAIARHGLWRGGWMGFFRVVRCGPFGTHGFDPVPRELSPDLKWYMPWRYWRCSASRIGK.

The segment at 1–23 (MGSCGGKHTGKGAPKPYSRNFTD) is disordered.

The protein belongs to the UPF0161 family.

It localises to the cell inner membrane. Could be involved in insertion of integral membrane proteins into the membrane. The polypeptide is Putative membrane protein insertion efficiency factor (Brucella abortus (strain 2308)).